The sequence spans 501 residues: 2,3-bisphosphoglycerate-independent phosphoglycerate mutase (501 aa).

2 residues coordinate Mn(2+): D12 and S62. Catalysis depends on S62, which acts as the Phosphoserine intermediate. Substrate-binding positions include H121, 150–151 (RD), R182, R188, 253–256 (RSDR), and K322. Mn(2+) is bound by residues D389, H393, D430, H431, and H449.

This sequence belongs to the BPG-independent phosphoglycerate mutase family. As to quaternary structure, monomer. The cofactor is Mn(2+).

It carries out the reaction (2R)-2-phosphoglycerate = (2R)-3-phosphoglycerate. It functions in the pathway carbohydrate degradation; glycolysis; pyruvate from D-glyceraldehyde 3-phosphate: step 3/5. In terms of biological role, catalyzes the interconversion of 2-phosphoglycerate and 3-phosphoglycerate. In Ehrlichia ruminantium (strain Welgevonden), this protein is 2,3-bisphosphoglycerate-independent phosphoglycerate mutase.